Here is a 157-residue protein sequence, read N- to C-terminus: 6,7-dimethyl-8-ribityllumazine synthase (157 aa).

5-amino-6-(D-ribitylamino)uracil-binding positions include F25, 59-61 (AME), and 83-85 (AII). 88–89 (ST) is a (2S)-2-hydroxy-3-oxobutyl phosphate binding site. H91 (proton donor) is an active-site residue. F116 provides a ligand contact to 5-amino-6-(D-ribitylamino)uracil. (2S)-2-hydroxy-3-oxobutyl phosphate is bound at residue R130.

The protein belongs to the DMRL synthase family.

It catalyses the reaction (2S)-2-hydroxy-3-oxobutyl phosphate + 5-amino-6-(D-ribitylamino)uracil = 6,7-dimethyl-8-(1-D-ribityl)lumazine + phosphate + 2 H2O + H(+). It functions in the pathway cofactor biosynthesis; riboflavin biosynthesis; riboflavin from 2-hydroxy-3-oxobutyl phosphate and 5-amino-6-(D-ribitylamino)uracil: step 1/2. Functionally, catalyzes the formation of 6,7-dimethyl-8-ribityllumazine by condensation of 5-amino-6-(D-ribitylamino)uracil with 3,4-dihydroxy-2-butanone 4-phosphate. This is the penultimate step in the biosynthesis of riboflavin. In Lawsonia intracellularis (strain PHE/MN1-00), this protein is 6,7-dimethyl-8-ribityllumazine synthase.